The sequence spans 195 residues: MATITNADPYKILFEQDIKTATNIPMVTFISNVEEFVKDKDVENVFKQLQEAYQKYKFFESKLSNNISMLTQRSKQLQESLDIVDHVENKSNESFSVQYELSEGVYSSAQVNEPKSIYLWLGANVMLEYSFEEAREVLRKNKDTVDRQLSESIQDLGFVKDQITTTDVNVSRVYNYDIIQKRKLKLSGKTEEEEK.

Belongs to the prefoldin subunit alpha family. Heterohexamer of two PFD-alpha type and four PFD-beta type subunits.

Binds specifically to cytosolic chaperonin (c-CPN) and transfers target proteins to it. Binds to nascent polypeptide chain and promotes folding in an environment in which there are many competing pathways for nonnative proteins. This chain is Probable prefoldin subunit 3 (pfdn3), found in Dictyostelium discoideum (Social amoeba).